The primary structure comprises 107 residues: uncharacterized protein (107 aa).

Residues 88–107 form a disordered region; it reads GSTPWGSGRQVNAARPIGGR.

It is found in the virion. This is an uncharacterized protein from Acanthamoeba polyphaga (Amoeba).